We begin with the raw amino-acid sequence, 607 residues long: Glutamine--fructose-6-phosphate aminotransferase [isomerizing] (607 aa).

The Nucleophile; for GATase activity role is filled by Cys-2. Positions 2–217 (CGIIGILGKR…DGDWAVLTRE (216 aa)) constitute a Glutamine amidotransferase type-2 domain. 2 SIS domains span residues 277-422 (TVRS…QRGF) and 455-597 (ICRN…VDQP). The active-site For Fru-6P isomerization activity is Lys-602.

In terms of assembly, homodimer.

Its subcellular location is the cytoplasm. It catalyses the reaction D-fructose 6-phosphate + L-glutamine = D-glucosamine 6-phosphate + L-glutamate. Functionally, catalyzes the first step in hexosamine metabolism, converting fructose-6P into glucosamine-6P using glutamine as a nitrogen source. This is Glutamine--fructose-6-phosphate aminotransferase [isomerizing] from Bartonella henselae (strain ATCC 49882 / DSM 28221 / CCUG 30454 / Houston 1) (Rochalimaea henselae).